The sequence spans 705 residues: Elongation factor G (705 aa).

One can recognise a tr-type G domain in the interval 8-294 (DRYRNFGIMA…AVIDYLPSPL (287 aa)). GTP is bound by residues 17 to 24 (AHIDAGKT), 92 to 96 (DTPGH), and 146 to 149 (NKMD).

Belongs to the TRAFAC class translation factor GTPase superfamily. Classic translation factor GTPase family. EF-G/EF-2 subfamily.

It is found in the cytoplasm. In terms of biological role, catalyzes the GTP-dependent ribosomal translocation step during translation elongation. During this step, the ribosome changes from the pre-translocational (PRE) to the post-translocational (POST) state as the newly formed A-site-bound peptidyl-tRNA and P-site-bound deacylated tRNA move to the P and E sites, respectively. Catalyzes the coordinated movement of the two tRNA molecules, the mRNA and conformational changes in the ribosome. This Dinoroseobacter shibae (strain DSM 16493 / NCIMB 14021 / DFL 12) protein is Elongation factor G.